The following is a 332-amino-acid chain: 2,3-diketo-L-gulonate reductase (332 aa).

Residue His-44 is the Proton donor of the active site. Residues 168–174, 224–225, and 304–306 contribute to the NAD(+) site; these read ITMVDMS, WK, and GHE.

This sequence belongs to the LDH2/MDH2 oxidoreductase family. DlgD subfamily. Homodimer.

The protein localises to the cytoplasm. The catalysed reaction is 3-dehydro-L-gulonate + NAD(+) = 2,3-dioxo-L-gulonate + NADH + H(+). The enzyme catalyses 3-dehydro-L-gulonate + NADP(+) = 2,3-dioxo-L-gulonate + NADPH + H(+). Catalyzes the reduction of 2,3-diketo-L-gulonate in the presence of NADH, to form 3-keto-L-gulonate. The sequence is that of 2,3-diketo-L-gulonate reductase from Escherichia coli O8 (strain IAI1).